The following is a 284-amino-acid chain: WUSCHEL-related homeobox 10 (284 aa).

Residues 1–43 (MDRTATASWEVMSRRGEQQQQLMMQAPASHNGGSGGGEPARSR) are disordered. The segment at residues 39-103 (PARSRWAPKP…NRRSRSRRRA (65 aa)) is a DNA-binding region (homeobox; WUS-type).

Belongs to the WUS homeobox family.

The protein resides in the nucleus. Functionally, transcription factor which may be involved in developmental processes. This is WUSCHEL-related homeobox 10 (WOX10) from Oryza sativa subsp. japonica (Rice).